The primary structure comprises 274 residues: Large ribosomal subunit protein uL2cz/uL2cy (274 aa).

2 disordered regions span residues Met1–Gly33 and Met223–Asp265.

The protein belongs to the universal ribosomal protein uL2 family. Part of the 50S ribosomal subunit.

The protein localises to the plastid. Its subcellular location is the chloroplast. This Pelargonium hortorum (Common geranium) protein is Large ribosomal subunit protein uL2cz/uL2cy (rpl2-A).